The following is a 268-amino-acid chain: NADH-quinone oxidoreductase subunit B 1 (268 aa).

Cys42, Cys43, Cys108, and Cys138 together coordinate [4Fe-4S] cluster.

This sequence belongs to the complex I 20 kDa subunit family. As to quaternary structure, NDH-1 is composed of 14 different subunits. Subunits NuoB, C, D, E, F, and G constitute the peripheral sector of the complex. [4Fe-4S] cluster serves as cofactor.

The protein localises to the cell membrane. It catalyses the reaction a quinone + NADH + 5 H(+)(in) = a quinol + NAD(+) + 4 H(+)(out). Functionally, NDH-1 shuttles electrons from NADH, via FMN and iron-sulfur (Fe-S) centers, to quinones in the respiratory chain. The immediate electron acceptor for the enzyme in this species is believed to be ubiquinone. Couples the redox reaction to proton translocation (for every two electrons transferred, four hydrogen ions are translocated across the cytoplasmic membrane), and thus conserves the redox energy in a proton gradient. This chain is NADH-quinone oxidoreductase subunit B 1, found in Roseiflexus sp. (strain RS-1).